We begin with the raw amino-acid sequence, 156 residues long: uncharacterized protein (156 aa).

This is an uncharacterized protein from Bacillus subtilis (strain 168).